The sequence spans 537 residues: Polyadenylate-binding protein 6 (537 aa).

RRM domains lie at 21 to 99 (GSLY…WSQR), 112 to 188 (ANLY…KFIN), 202 to 279 (TNVY…KALK), and 304 to 381 (SNLY…VAER). The disordered stretch occupies residues 503-537 (KATTSEENRKEERRLTLSGKLSPEVKVEESGKQLQ). Basic and acidic residues-rich tracts occupy residues 506–517 (TSEENRKEERRL) and 525–537 (PEVK…KQLQ).

Belongs to the polyadenylate-binding protein type-1 family. As to expression, expressed at low levels in leaves and young seedlings.

It is found in the cytoplasm. Its subcellular location is the nucleus. Functionally, binds the poly(A) tail of mRNA. Appears to be an important mediator of the multiple roles of the poly(A) tail in mRNA biogenesis, stability and translation. The polypeptide is Polyadenylate-binding protein 6 (PAB6) (Arabidopsis thaliana (Mouse-ear cress)).